The following is a 678-amino-acid chain: WD repeat-containing protein 48 (678 aa).

WD repeat units lie at residues 28-67 (YNRNGVNALQLDPALNRLFTAGRDSIIRIWNVNQHKQDPY), 73-112 (HHTDWVNDIVLCCNGKTLISASSDTTVKVWNAHKGFCMST), 115-154 (THKDYVKALAYAKDKELVASAGLDRQIFLWDVNTLTALTA), 166-205 (GNKDSIYSLAMNQMGTVIVSGSTEKVLRVWDPRTCQKLMK), 208-247 (GHTDNVKALLLNRDGTQCLSGSSDGTIRLWSLGQQRCIAT), 250-289 (VHDEGVWALQVNEGFTHVYSGGRDRKIYCTDLRNPDIRLL), 292-334 (EEKA…NFRS), and 358-397 (KGGASIIQCNILNDKRHILTKDTNNNVAYWDVLKACKVED). The disordered stretch occupies residues 608–629 (VDTESQTTSSSNNEKPGEQEKE). Residues 610 to 621 (TESQTTSSSNNE) are compositionally biased toward low complexity.

It belongs to the WD repeat WDR48 family.

Its subcellular location is the nucleus. The protein resides in the cytoplasm. It is found in the lysosome. It localises to the late endosome. Functionally, regulator of deubiquitinating complexes, which acts as a strong activator of usp1, usp12 and usp46. Enhances the usp1-mediated deubiquitination of fancd2; usp1 being almost inactive by itself. Activates deubiquitination by increasing the catalytic turnover without increasing the affinity of deubiquitinating enzymes for the substrate. Also activates deubiquitinating activity of complexes containing usp12. Together with rad51ap1, promotes DNA repair by stimulating rad51-mediated homologous recombination. Binds single-stranded DNA (ssDNA) and double-stranded DNA (dsDNA). DNA-binding is required both for usp1-mediated deubiquitination of fancd2 and stimulation of rad51-mediated homologous recombination: both wdr48/uaf1 and rad51ap1 have coordinated role in DNA-binding during these processes. Together with atad5 and by regulating usp1 activity, has a role in pcna-mediated translesion synthesis (TLS) by deubiquitinating monoubiquitinated pcna. Together with atad5, has a role in recruiting rad51 to stalled forks during replication stress. The chain is WD repeat-containing protein 48 (wdr48) from Xenopus tropicalis (Western clawed frog).